Reading from the N-terminus, the 121-residue chain is Large ribosomal subunit protein uL18 (121 aa).

This sequence belongs to the universal ribosomal protein uL18 family. As to quaternary structure, part of the 50S ribosomal subunit; part of the 5S rRNA/L5/L18/L25 subcomplex. Contacts the 5S and 23S rRNAs.

This is one of the proteins that bind and probably mediate the attachment of the 5S RNA into the large ribosomal subunit, where it forms part of the central protuberance. This chain is Large ribosomal subunit protein uL18, found in Ehrlichia chaffeensis (strain ATCC CRL-10679 / Arkansas).